A 366-amino-acid chain; its full sequence is Protein FAM110B (366 aa).

3 disordered regions span residues 127–150 (SSEGSSSGSGHKHSSRNWPPHRDT), 163–182 (KVYPTPGRGSPQESSSHVSR), and 214–253 (IPCSSSAPPLPPKPKVAAMKSPDADQVEPACGVSRRPSLQ). 2 positions are modified to phosphoserine: Ser234 and Ser297. The tract at residues 313–333 (DCEQSQDSNSDLRNDDSANDR) is disordered. Basic and acidic residues predominate over residues 322 to 331 (SDLRNDDSAN).

This sequence belongs to the FAM110 family.

It is found in the cytoplasm. Its subcellular location is the cytoskeleton. The protein resides in the microtubule organizing center. It localises to the centrosome. The chain is Protein FAM110B (Fam110b) from Rattus norvegicus (Rat).